The chain runs to 190 residues: MKLLLSLAFVLALSQVKADKPVWADEAANGEHQDAWKHLQKLVEENYDLIKATYKNDPVWGNDFTCVGTAAQNLNEDEKNVEAWFMFMNNADTVYQHTFEKATPDKMYGYNKENAITYQTEDGQVLTDVLAFSDDNCYVIYALGPDGSGAGYELWATDYTDVPASCLEKFNEYAAGLPVRDVYTSDCLPE.

The first 18 residues, 1–18, serve as a signal peptide directing secretion; it reads MKLLLSLAFVLALSQVKA. Tyr-54, Asp-57, Trp-60, Glu-100, Tyr-118, Glu-153, and Trp-155 together coordinate histamine. 2 cysteine pairs are disulfide-bonded: Cys-66–Cys-187 and Cys-137–Cys-166.

The protein belongs to the calycin superfamily. Histamine-binding salivary protein family. Monomer. As to expression, expressed in salivary glands.

Its subcellular location is the secreted. Functionally, salivary tick protein that acts by scavenging histamine at the wound site, outcompeting histamine receptors for histamine, thereby overcoming host inflammatory responses. Binds histamine with a high-affinity (Kd=18 nM). Contains two binding histamine sites (H and L), that appear to bind histamine with differing affinities (high and low). In vivo, when tested on a mouse asthma model, shows a profound inhibitory effect on allergic asthma. Aerosol administration of this protein prevents airway hyperreactivity and abrogates peribronchial inflammation, eosinophil recruitment, mucus hypersecretion, and interleukins (IL-4 and IL-5) secretion. In addition, when tested on a mouse model of acute respiratory distress syndrome (ARDS), it attenuates endotoxin-induced acute lung injury. This Rhipicephalus appendiculatus (Brown ear tick) protein is Female-specific histamine-binding protein 1.